The following is a 145-amino-acid chain: 3-hydroxyacyl-[acyl-carrier-protein] dehydratase FabZ (145 aa).

His-48 is an active-site residue.

This sequence belongs to the thioester dehydratase family. FabZ subfamily.

The protein resides in the cytoplasm. The catalysed reaction is a (3R)-hydroxyacyl-[ACP] = a (2E)-enoyl-[ACP] + H2O. Functionally, involved in unsaturated fatty acids biosynthesis. Catalyzes the dehydration of short chain beta-hydroxyacyl-ACPs and long chain saturated and unsaturated beta-hydroxyacyl-ACPs. The polypeptide is 3-hydroxyacyl-[acyl-carrier-protein] dehydratase FabZ (Stutzerimonas stutzeri (strain A1501) (Pseudomonas stutzeri)).